A 463-amino-acid chain; its full sequence is Chromosomal replication initiator protein DnaA (463 aa).

The tract at residues 1–83 is domain I, interacts with DnaA modulators; it reads MNTNQIILTD…LQLFQHYNNT (83 aa). Positions 83 to 124 are domain II; that stretch reads TIKSIDIITKELPGTTQTVIELPTKTFADIGSSELNSENIFS. Residues 125-343 are domain III, AAA+ region; the sequence is TLDVRFTFDN…GALNKVIAHS (219 aa). ATP-binding residues include G171, G173, K174, and T175. The segment at 344 to 463 is domain IV, binds dsDNA; sequence NFTLKEITLE…INLLMKILQH (120 aa).

This sequence belongs to the DnaA family. In terms of assembly, oligomerizes as a right-handed, spiral filament on DNA at oriC.

It is found in the cytoplasm. Its function is as follows. Plays an essential role in the initiation and regulation of chromosomal replication. ATP-DnaA binds to the origin of replication (oriC) to initiate formation of the DNA replication initiation complex once per cell cycle. Binds the DnaA box (a 9 base pair repeat at the origin) and separates the double-stranded (ds)DNA. Forms a right-handed helical filament on oriC DNA; dsDNA binds to the exterior of the filament while single-stranded (ss)DNA is stabiized in the filament's interior. The ATP-DnaA-oriC complex binds and stabilizes one strand of the AT-rich DNA unwinding element (DUE), permitting loading of DNA polymerase. After initiation quickly degrades to an ADP-DnaA complex that is not apt for DNA replication. Binds acidic phospholipids. This is Chromosomal replication initiator protein DnaA from Rickettsia akari (strain Hartford).